A 237-amino-acid chain; its full sequence is Alpha-S1-casein (237 aa).

The first 15 residues, Met1–Ala15, serve as a signal peptide directing secretion. Positions Glu39–Asp60 are disordered. Phosphoserine occurs at positions 79, 80, and 81.

This sequence belongs to the alpha-casein family. Mammary gland specific. Secreted in milk.

The protein localises to the secreted. In terms of biological role, important role in the capacity of milk to transport calcium phosphate. This is Alpha-S1-casein (CSN1S1) from Notamacropus eugenii (Tammar wallaby).